The chain runs to 215 residues: Peroxiredoxin-5, mitochondrial (215 aa).

The N-terminal 53 residues, 1–53, are a transit peptide targeting the mitochondrion; sequence MGLAGVCVLRRSAGYILGGAAGQSVAATAAARRRSEGGWASGGVRSFSRAAAA. Positions 57 to 215 constitute a Thioredoxin domain; sequence IKVGDAIPAV…SLAPSIISQL (159 aa). Residue K76 is modified to N6-acetyllysine. K84 carries the N6-acetyllysine; alternate modification. K84 is subject to N6-succinyllysine; alternate. C101 serves as the catalytic Cysteine sulfenic acid (-SOH) intermediate. C101 carries the S-palmitoyl cysteine lipid modification. C101 and C205 are joined by a disulfide. N6-succinyllysine is present on K117. Residues S172 and S183 each carry the phosphoserine modification. Residues 213–215 carry the Microbody targeting signal motif; sequence SQL.

Belongs to the peroxiredoxin family. Prx5 subfamily. As to quaternary structure, monomer. In terms of processing, S-palmitoylated. Palmitoylation occurs on the active site, inhibiting its reactivity; therefore PRDX5 palmitoylation status determines its antioxidant capacity. S-palmitoylated. Depalmitoylated by ABHD10.

The protein resides in the mitochondrion. It localises to the cytoplasm. It is found in the peroxisome matrix. The catalysed reaction is a hydroperoxide + [thioredoxin]-dithiol = an alcohol + [thioredoxin]-disulfide + H2O. In terms of biological role, thiol-specific peroxidase that catalyzes the reduction of hydrogen peroxide and organic hydroperoxides to water and alcohols, respectively. Plays a role in cell protection against oxidative stress by detoxifying peroxides and as sensor of hydrogen peroxide-mediated signaling events. This is Peroxiredoxin-5, mitochondrial (PRDX5) from Papio hamadryas (Hamadryas baboon).